The primary structure comprises 230 residues: Ribonuclease 3 (230 aa).

Residues 5 to 125 (YSRFYNILGY…VIGAIYLDSD (121 aa)) enclose the RNase III domain. Glu-40 lines the Mg(2+) pocket. Asp-44 is an active-site residue. Residues Asp-111 and Glu-114 each coordinate Mg(2+). Glu-114 is a catalytic residue. One can recognise a DRBM domain in the interval 153 to 223 (DSKSKLQEIL…AEKMIEMLSQ (71 aa)).

It belongs to the ribonuclease III family. In terms of assembly, homodimer. The cofactor is Mg(2+).

It localises to the cytoplasm. It carries out the reaction Endonucleolytic cleavage to 5'-phosphomonoester.. In terms of biological role, digests double-stranded RNA. Involved in the processing of primary rRNA transcript to yield the immediate precursors to the large and small rRNAs (23S and 16S). Processes some mRNAs, and tRNAs when they are encoded in the rRNA operon. Processes pre-crRNA and tracrRNA of type II CRISPR loci if present in the organism. The chain is Ribonuclease 3 from Francisella tularensis subsp. tularensis (strain WY96-3418).